The chain runs to 183 residues: MFSIINGLKNYNQQAIQAARYIGQGFLVTLDHMNRLPTTIQYPYEKLIPSERFRGRIHFEFDKCIACEVCVRVCPINLPVVDWELKKTIKKKQLKNYSIDFGVCIFCGNCVEYCPTNCLSMTEEYELSTYNRHELNYDQIALGRLPISIIEDSTIENIFNLTSLPKGKIEGHIYSRNITNIVN.

4Fe-4S ferredoxin-type domains follow at residues 55–84 (GRIH…VDWE) and 95–124 (KNYS…MTEE). Residues Cys-64, Cys-67, Cys-70, Cys-74, Cys-104, Cys-107, Cys-110, and Cys-114 each coordinate [4Fe-4S] cluster.

It belongs to the complex I 23 kDa subunit family. NDH is composed of at least 16 different subunits, 5 of which are encoded in the nucleus. [4Fe-4S] cluster is required as a cofactor.

The protein localises to the plastid. The protein resides in the chloroplast thylakoid membrane. The catalysed reaction is a plastoquinone + NADH + (n+1) H(+)(in) = a plastoquinol + NAD(+) + n H(+)(out). It carries out the reaction a plastoquinone + NADPH + (n+1) H(+)(in) = a plastoquinol + NADP(+) + n H(+)(out). NDH shuttles electrons from NAD(P)H:plastoquinone, via FMN and iron-sulfur (Fe-S) centers, to quinones in the photosynthetic chain and possibly in a chloroplast respiratory chain. The immediate electron acceptor for the enzyme in this species is believed to be plastoquinone. Couples the redox reaction to proton translocation, and thus conserves the redox energy in a proton gradient. The polypeptide is NAD(P)H-quinone oxidoreductase subunit I, chloroplastic (Marchantia polymorpha (Common liverwort)).